We begin with the raw amino-acid sequence, 278 residues long: Maltodextrin transport system permease protein MdxG (278 aa).

6 helical membrane-spanning segments follow: residues 12 to 32 (ICTYLFLTLLSIVIIYPLLIT), 74 to 94 (TLVIALSVMVLQVTIVTLAGY), 108 to 128 (LIFFLIIQMVPTMAALTAFYV), 131 to 151 (MLIGALDQYWFLTAIYIGGGI), 183 to 203 (IFASIVLPLVKPMLAVQALWA), and 242 to 262 (VALFAAGAILAALPICVLFFF). One can recognise an ABC transmembrane type-1 domain in the interval 71-263 (YSNTLVIALS…LPICVLFFFL (193 aa)).

Belongs to the binding-protein-dependent transport system permease family. MalFG subfamily. As to quaternary structure, the complex is composed of two ATP-binding proteins (MsmX), two transmembrane proteins (MdxF and MdxG) and a solute-binding protein (MdxE).

It localises to the cell membrane. In terms of biological role, part of the ABC transporter complex involved in maltodextrin import. Probably responsible for the translocation of the substrate across the membrane. The polypeptide is Maltodextrin transport system permease protein MdxG (mdxG) (Bacillus subtilis (strain 168)).